We begin with the raw amino-acid sequence, 373 residues long: ORC1-type DNA replication protein 2 (373 aa).

ATP contacts are provided by residues 63 to 67 (TGKTS), Tyr205, and Arg217.

It belongs to the CDC6/cdc18 family.

In terms of biological role, involved in regulation of DNA replication. This chain is ORC1-type DNA replication protein 2 (cdc6-2), found in Methanosarcina mazei (strain ATCC BAA-159 / DSM 3647 / Goe1 / Go1 / JCM 11833 / OCM 88) (Methanosarcina frisia).